The following is a 393-amino-acid chain: Sialyltransferase-like protein 1 (393 aa).

At 1 to 8 (MKRPLRRP) the chain is on the cytoplasmic side. The helical; Signal-anchor for type II membrane protein transmembrane segment at 9–27 (FAVLLFVVLCAAASFPSVL) threads the bilayer. At 28 to 393 (RRSVGPAPVL…IAVPPVVFYH (366 aa)) the chain is on the lumenal side. N-linked (GlcNAc...) asparagine glycans are attached at residues Asn-49, Asn-212, and Asn-258.

Belongs to the glycosyltransferase 29 family.

The protein localises to the golgi apparatus membrane. In terms of biological role, possesses sialyltransferase-like activity in vitro. Transfers sialic acid to the oligosaccharide Gal-beta-1,3-GalNAc and to glycoproteins such as asialofetuin, alpha-1-acid glycoprotein (NeuAc-alpha-2,3-Gal-beta-1,3-GalNAc-) and andasialo-alpha-1-acid glycoprotein. The transferred sialic acid is linked to galactose of Gal-beta-1,3-GalNAc through alpha-2,6-linkage. This chain is Sialyltransferase-like protein 1, found in Oryza sativa subsp. indica (Rice).